Consider the following 184-residue polypeptide: Fe/S biogenesis protein NfuA (184 aa).

2 residues coordinate [4Fe-4S] cluster: cysteine 142 and cysteine 145.

It belongs to the NfuA family. In terms of assembly, homodimer. [4Fe-4S] cluster is required as a cofactor.

Its function is as follows. Involved in iron-sulfur cluster biogenesis. Binds a 4Fe-4S cluster, can transfer this cluster to apoproteins, and thereby intervenes in the maturation of Fe/S proteins. Could also act as a scaffold/chaperone for damaged Fe/S proteins. This chain is Fe/S biogenesis protein NfuA, found in Wigglesworthia glossinidia brevipalpis.